We begin with the raw amino-acid sequence, 189 residues long: Small ribosomal subunit protein uS5 (189 aa).

One can recognise an S5 DRBM domain in the interval 20–83 (FVDRLVHINR…ESAKRALIRV (64 aa)).

It belongs to the universal ribosomal protein uS5 family. Part of the 30S ribosomal subunit. Contacts proteins S4 and S8.

Functionally, with S4 and S12 plays an important role in translational accuracy. In terms of biological role, located at the back of the 30S subunit body where it stabilizes the conformation of the head with respect to the body. The sequence is that of Small ribosomal subunit protein uS5 from Beijerinckia indica subsp. indica (strain ATCC 9039 / DSM 1715 / NCIMB 8712).